The chain runs to 194 residues: Fibroblast growth factor 7 (194 aa).

Residues 1–31 (MRKWILTWILPSLLHRSCFHIICLVGTLSLD) form the signal peptide. Residue Asn45 is glycosylated (N-linked (GlcNAc...) asparagine).

This sequence belongs to the heparin-binding growth factors family. As to quaternary structure, interacts with FGFBP1. Interacts with FGFR2. Affinity between fibroblast growth factors (FGFs) and their receptors is increased by heparan sulfate glycosaminoglycans that function as coreceptors.

The protein localises to the secreted. Plays an important role in the regulation of embryonic development, cell proliferation and cell differentiation. Required for normal branching morphogenesis. Growth factor active on keratinocytes. Possible major paracrine effector of normal epithelial cell proliferation. This Sus scrofa (Pig) protein is Fibroblast growth factor 7 (FGF7).